The primary structure comprises 638 residues: ATP-dependent zinc metalloprotease FtsH (638 aa).

Residues 1–11 (MSQKGKNKKWR) are Cytoplasmic-facing. The chain crosses the membrane as a helical span at residues 12 to 32 (SAGLYALLAIVLISLATTFLG). Over 33–114 (NRPPERLEIS…LAVRPVQEEG (82 aa)) the chain is Lumenal. A helical membrane pass occupies residues 115–135 (LLGRILSTFFLPVLLLLGLFF). Topologically, residues 136–638 (LLRRAQNGPG…TLPMAVNAGA (503 aa)) are cytoplasmic. 209-216 (GPPGTGKT) contributes to the ATP binding site. H431 contacts Zn(2+). The active site involves E432. Residues H435 and D510 each contribute to the Zn(2+) site.

In the central section; belongs to the AAA ATPase family. The protein in the C-terminal section; belongs to the peptidase M41 family. Homohexamer. It depends on Zn(2+) as a cofactor.

It localises to the cellular thylakoid membrane. Its function is as follows. Acts as a processive, ATP-dependent zinc metallopeptidase for both cytoplasmic and membrane proteins. Plays a role in the quality control of integral membrane proteins. This Synechococcus sp. (strain JA-2-3B'a(2-13)) (Cyanobacteria bacterium Yellowstone B-Prime) protein is ATP-dependent zinc metalloprotease FtsH.